Consider the following 152-residue polypeptide: Large ribosomal subunit protein bL9 (152 aa).

This sequence belongs to the bacterial ribosomal protein bL9 family.

Binds to the 23S rRNA. The polypeptide is Large ribosomal subunit protein bL9 (Thermosynechococcus vestitus (strain NIES-2133 / IAM M-273 / BP-1)).